Reading from the N-terminus, the 862-residue chain is Molybdenum cofactor sulfurase (862 aa).

Phosphoserine is present on S34. Residue K264 is modified to N6-(pyridoxal phosphate)lysine. C424 is an active-site residue. The residue at position 517 (S517) is a Phosphoserine. Residues 704-855 enclose the MOSC domain; that stretch reads RKTPKKGQPP…LSVGSEVLPV (152 aa).

It belongs to the class-V pyridoxal-phosphate-dependent aminotransferase family. MOCOS subfamily. The cofactor is pyridoxal 5'-phosphate.

The enzyme catalyses Mo-molybdopterin + L-cysteine + AH2 = thio-Mo-molybdopterin + L-alanine + A + H2O. Its pathway is cofactor biosynthesis; molybdopterin biosynthesis. Functionally, sulfurates the molybdenum cofactor. Sulfation of molybdenum is essential for xanthine dehydrogenase (XDH) and aldehyde oxidase (ADO) enzymes in which molybdenum cofactor is liganded by 1 oxygen and 1 sulfur atom in active form. In Mus musculus (Mouse), this protein is Molybdenum cofactor sulfurase (Mocos).